Reading from the N-terminus, the 615-residue chain is Dihydroxy-acid dehydratase (615 aa).

Mg(2+) is bound at residue aspartate 81. A [2Fe-2S] cluster-binding site is contributed by cysteine 122. Residues aspartate 123 and lysine 124 each coordinate Mg(2+). Lysine 124 is subject to N6-carboxylysine. Residue cysteine 195 participates in [2Fe-2S] cluster binding. Glutamate 491 contributes to the Mg(2+) binding site. Catalysis depends on serine 517, which acts as the Proton acceptor.

The protein belongs to the IlvD/Edd family. As to quaternary structure, homodimer. [2Fe-2S] cluster serves as cofactor. Requires Mg(2+) as cofactor.

The enzyme catalyses (2R)-2,3-dihydroxy-3-methylbutanoate = 3-methyl-2-oxobutanoate + H2O. It catalyses the reaction (2R,3R)-2,3-dihydroxy-3-methylpentanoate = (S)-3-methyl-2-oxopentanoate + H2O. It functions in the pathway amino-acid biosynthesis; L-isoleucine biosynthesis; L-isoleucine from 2-oxobutanoate: step 3/4. The protein operates within amino-acid biosynthesis; L-valine biosynthesis; L-valine from pyruvate: step 3/4. Its function is as follows. Functions in the biosynthesis of branched-chain amino acids. Catalyzes the dehydration of (2R,3R)-2,3-dihydroxy-3-methylpentanoate (2,3-dihydroxy-3-methylvalerate) into 2-oxo-3-methylpentanoate (2-oxo-3-methylvalerate) and of (2R)-2,3-dihydroxy-3-methylbutanoate (2,3-dihydroxyisovalerate) into 2-oxo-3-methylbutanoate (2-oxoisovalerate), the penultimate precursor to L-isoleucine and L-valine, respectively. The polypeptide is Dihydroxy-acid dehydratase (Shewanella pealeana (strain ATCC 700345 / ANG-SQ1)).